Here is a 361-residue protein sequence, read N- to C-terminus: Phospho-N-acetylmuramoyl-pentapeptide-transferase (361 aa).

Transmembrane regions (helical) follow at residues 25 to 45 (RGILAALTALFLSLWMGPAVI), 73 to 93 (TMGGSLILLTVTLSVLLWGDL), 98 to 118 (VWLVLAVMICFGAIGWYDDWI), 139 to 159 (IFGLAAGLFLYYTADVPAAIT), 168 to 188 (IALPLAGVSFVVIAYFWIVGF), 200 to 220 (GLAIMPTVLVACALGVFAYAS), 237 to 257 (AGELIIICSAIAGAGLGFLWF), 264 to 284 (VFMGDIGALSLGAVLGTIAVI), 289 to 309 (MVLVIMGGVFVIETLSVIIQV), and 339 to 359 (VIVRFWIISVVLVLIGLATLK).

It belongs to the glycosyltransferase 4 family. MraY subfamily. The cofactor is Mg(2+).

Its subcellular location is the cell inner membrane. The enzyme catalyses UDP-N-acetyl-alpha-D-muramoyl-L-alanyl-gamma-D-glutamyl-meso-2,6-diaminopimeloyl-D-alanyl-D-alanine + di-trans,octa-cis-undecaprenyl phosphate = di-trans,octa-cis-undecaprenyl diphospho-N-acetyl-alpha-D-muramoyl-L-alanyl-D-glutamyl-meso-2,6-diaminopimeloyl-D-alanyl-D-alanine + UMP. Its pathway is cell wall biogenesis; peptidoglycan biosynthesis. Functionally, catalyzes the initial step of the lipid cycle reactions in the biosynthesis of the cell wall peptidoglycan: transfers peptidoglycan precursor phospho-MurNAc-pentapeptide from UDP-MurNAc-pentapeptide onto the lipid carrier undecaprenyl phosphate, yielding undecaprenyl-pyrophosphoryl-MurNAc-pentapeptide, known as lipid I. The polypeptide is Phospho-N-acetylmuramoyl-pentapeptide-transferase (Xanthomonas oryzae pv. oryzae (strain PXO99A)).